We begin with the raw amino-acid sequence, 3303 residues long: Protein unc-80 homolog (3303 aa).

A compositionally biased stretch (low complexity) spans 1 to 37 (MVTNAAGTAATGGATSNTTNNNNLQTNNNSHGANNNN). The interval 1-43 (MVTNAAGTAATGGATSNTTNNNNLQTNNNSHGANNNNDDFDFD) is disordered. The helical transmembrane segment at 202 to 222 (LFSVPTITLFVYLFAPIIHHL) threads the bilayer. Disordered stretches follow at residues 284-316 (LSADAMSPKADSPQSGISDYGRQDEEGSWVSSP), 361-422 (LQQQ…SESI), 491-512 (LYQGPGSNSRDSPGSSVVKDYI), 526-546 (AEEPQSAPSTTERRGSEKKKR), 1036-1067 (FRRRTTGVRPTLTPRHSERALLSDSTSSSERN), 1443-1563 (LHEP…DDTA), and 1627-1671 (VEPT…KDRI). Low complexity predominate over residues 361–377 (LQQQQSQSRRGSRQSMN). 2 stretches are compositionally biased toward basic and acidic residues: residues 378–391 (SRDKDKVPSTKFEF) and 401–422 (SMKEKRSASIEKETDSDKSESI). The span at 495 to 505 (PGSNSRDSPGS) shows a compositional bias: polar residues. Polar residues predominate over residues 1058–1067 (SDSTSSSERN). The segment covering 1490 to 1499 (FKRRSLKLRR) has biased composition (basic residues). A compositionally biased stretch (polar residues) spans 1546–1556 (DDQQPESPTDS). Residues 1660 to 1671 (KRKDSLSRKDRI) are compositionally biased toward basic and acidic residues. A run of 3 helical transmembrane segments spans residues 1969 to 1989 (VYEIAYQVIWVCLVEESALFL), 2018 to 2038 (LPQQAAFALYNSIIGYIMFYV), and 2048 to 2068 (LVGSALSVLWMVVHSVHGIMF). 3 disordered regions span residues 2518–2550 (NGPYRNSPEHKGSSQRNCSRGPPCSPGLDFEEE), 3003–3158 (EEKR…FKAQ), and 3170–3262 (FRHS…YRDN). The segment covering 3003-3018 (EEKRYDRESSEQKKSD) has biased composition (basic and acidic residues). Polar residues-rich tracts occupy residues 3033–3053 (QRPSLISIFTGTTTGQASHSH) and 3071–3106 (PSDTLSQQTLHPPRESLSSSSTGRDPHTTTSESQSG). Positions 3124 to 3134 (SGHGSGGGIGT) are enriched in gly residues. The span at 3135-3152 (GAASAVPSHLSHSQSLQQ) shows a compositional bias: low complexity. The span at 3198–3217 (SRLQRSKAASRKTFRLKRSR) shows a compositional bias: basic residues. Polar residues predominate over residues 3226 to 3239 (IVTSQEEQAPQAQA). Low complexity predominate over residues 3246–3257 (SWDSVSQTSSTS).

Belongs to the unc-80 family. Interacts with unc79 and na. Can interact with unc79 independently of na.

The protein localises to the membrane. Functionally, component of the na (narrow abdomen) sodium channel complex. In the circadian clock neurons it functions with na and unc79 to promote circadian rhythmicity. This Drosophila melanogaster (Fruit fly) protein is Protein unc-80 homolog.